Consider the following 243-residue polypeptide: MEARVTVAGMGLVMEVQDYFDGEADRLAKAWLAEYTPQIKSLKDERKEAYRQIVEMSTEPQDVDLVRPANKFEMTRVREGEKEADLPVWKHHLLCDESGNYPALLNHWETKVFEIETKREGFAFWYRNPQYTGQSSLGIAYVEAEQYKIVRPDFLFFAEQDGKMVVDLVDPHSLHLADALPKLEGLALYAEHHSDAYRRIESVAEVKGKLRVLDLKRQDVQDAVATAENAETLFSSGLADDYQ.

The protein is Protein YagJ (yagJ) of Escherichia coli (strain K12).